Consider the following 488-residue polypeptide: Ribosomal protein uS12 methylthiotransferase RimO (488 aa).

An MTTase N-terminal domain is found at 4-120 (RKVHFVSLGC…LGRVLAGDAE (117 aa)). 6 residues coordinate [4Fe-4S] cluster: C13, C49, C83, C155, C159, and C162. The region spanning 141–377 (STPGGSAYVK…MTLQRRISHK (237 aa)) is the Radical SAM core domain. The TRAM domain occupies 380 to 448 (AAMIGRELEV…DYDLVGELLD (69 aa)).

Belongs to the methylthiotransferase family. RimO subfamily. It depends on [4Fe-4S] cluster as a cofactor.

The protein resides in the cytoplasm. The enzyme catalyses L-aspartate(89)-[ribosomal protein uS12]-hydrogen + (sulfur carrier)-SH + AH2 + 2 S-adenosyl-L-methionine = 3-methylsulfanyl-L-aspartate(89)-[ribosomal protein uS12]-hydrogen + (sulfur carrier)-H + 5'-deoxyadenosine + L-methionine + A + S-adenosyl-L-homocysteine + 2 H(+). Its function is as follows. Catalyzes the methylthiolation of an aspartic acid residue of ribosomal protein uS12. This Sorangium cellulosum (strain So ce56) (Polyangium cellulosum (strain So ce56)) protein is Ribosomal protein uS12 methylthiotransferase RimO.